Reading from the N-terminus, the 452-residue chain is Alkane uptake protein A (452 aa).

The N-terminal stretch at Met-1–Ala-36 is a signal peptide.

It belongs to the OmpP1/FadL family. As to quaternary structure, interacts with the inner membrane protein AupB.

The protein resides in the cell outer membrane. Its function is as follows. Required for growth on alkanes. Probably involved in the uptake of micelle-solubilized alkanes. In Marinobacter nauticus (strain ATCC 49840 / DSM 8798 / CIP 103578 / SP17) (Marinobacter hydrocarbonoclasticus), this protein is Alkane uptake protein A.